Here is a 210-residue protein sequence, read N- to C-terminus: Imidazoleglycerol-phosphate dehydratase (210 aa).

The protein belongs to the imidazoleglycerol-phosphate dehydratase family.

The enzyme catalyses D-erythro-1-(imidazol-4-yl)glycerol 3-phosphate = 3-(imidazol-4-yl)-2-oxopropyl phosphate + H2O. It participates in amino-acid biosynthesis; L-histidine biosynthesis; L-histidine from 5-phospho-alpha-D-ribose 1-diphosphate: step 6/9. The protein is Imidazoleglycerol-phosphate dehydratase (HIS3) of Candida glabrata (strain ATCC 2001 / BCRC 20586 / JCM 3761 / NBRC 0622 / NRRL Y-65 / CBS 138) (Yeast).